We begin with the raw amino-acid sequence, 236 residues long: 2,3,4,5-tetrahydropyridine-2,6-dicarboxylate N-acetyltransferase (236 aa).

The protein belongs to the transferase hexapeptide repeat family. DapH subfamily.

The catalysed reaction is (S)-2,3,4,5-tetrahydrodipicolinate + acetyl-CoA + H2O = L-2-acetamido-6-oxoheptanedioate + CoA. The protein operates within amino-acid biosynthesis; L-lysine biosynthesis via DAP pathway; LL-2,6-diaminopimelate from (S)-tetrahydrodipicolinate (acetylase route): step 1/3. Catalyzes the transfer of an acetyl group from acetyl-CoA to tetrahydrodipicolinate. This Geobacillus thermodenitrificans (strain NG80-2) protein is 2,3,4,5-tetrahydropyridine-2,6-dicarboxylate N-acetyltransferase.